The following is a 122-amino-acid chain: Small ribosomal subunit protein uS13 (122 aa).

The tract at residues 95–122 (GLPVRGQRTKTNARTRKGPKKTIAGKKK) is disordered.

The protein belongs to the universal ribosomal protein uS13 family. In terms of assembly, part of the 30S ribosomal subunit. Forms a loose heterodimer with protein S19. Forms two bridges to the 50S subunit in the 70S ribosome.

In terms of biological role, located at the top of the head of the 30S subunit, it contacts several helices of the 16S rRNA. In the 70S ribosome it contacts the 23S rRNA (bridge B1a) and protein L5 of the 50S subunit (bridge B1b), connecting the 2 subunits; these bridges are implicated in subunit movement. Contacts the tRNAs in the A and P-sites. The protein is Small ribosomal subunit protein uS13 of Corynebacterium aurimucosum (strain ATCC 700975 / DSM 44827 / CIP 107346 / CN-1) (Corynebacterium nigricans).